The chain runs to 589 residues: Probable cytochrome P450 49a1 (589 aa).

A disordered region spans residues 56-90 (TGESSNPKKLNVSQQPVTSVATTRTTASSLPAETT). Positions 57–71 (GESSNPKKLNVSQQP) are enriched in polar residues. The span at 72 to 84 (VTSVATTRTTASS) shows a compositional bias: low complexity. Cysteine 536 lines the heme pocket.

Belongs to the cytochrome P450 family. It depends on heme as a cofactor.

The protein localises to the endoplasmic reticulum membrane. Its subcellular location is the microsome membrane. May be involved in the metabolism of insect hormones and in the breakdown of synthetic insecticides. The protein is Probable cytochrome P450 49a1 (Cyp49a1) of Drosophila melanogaster (Fruit fly).